A 673-amino-acid chain; its full sequence is Armadillo repeat-containing protein 8 (673 aa).

Alanine 2 is subject to N-acetylalanine. ARM repeat units lie at residues 51–92, 95–134, 138–176, 178–217, 224–265, 269–309, 313–352, 374–413, 416–455, 458–497, 501–540, 543–585, 588–627, and 634–673; these read NKQK…SLAM, ENNV…TIFT, TPEE…HCCK, PDHQ…VLAF, MTLV…YMCR, IRTD…YLIE, ELQR…HDLK, DIRK…SLSR, QQLR…NLLL, SPSK…NMAF, QKIK…NLLS, PHID…NIAD, TAKE…NLTW, and QERQ…QYLA. Position 337 is a phosphoserine (serine 337). The residue at position 512 (serine 512) is a Phosphoserine.

In terms of assembly, identified in the CTLH complex that contains GID4, RANBP9 and/or RANBP10, MKLN1, MAEA, RMND5A (or alternatively its paralog RMND5B), GID8, ARMC8, WDR26 and YPEL5. Within this complex, MAEA, RMND5A (or alternatively its paralog RMND5B), GID8, WDR26, and RANBP9 and/or RANBP10 form the catalytic core, while GID4, MKLN1, ARMC8 and YPEL5 have ancillary roles.

The protein localises to the nucleus. The protein resides in the cytoplasm. Component of the CTLH E3 ubiquitin-protein ligase complex that selectively accepts ubiquitin from UBE2H and mediates ubiquitination and subsequent proteasomal degradation of the transcription factor HBP1. In Mus musculus (Mouse), this protein is Armadillo repeat-containing protein 8 (Armc8).